A 267-amino-acid chain; its full sequence is Large ribosomal subunit protein uL4 (267 aa).

The protein belongs to the universal ribosomal protein uL4 family. Part of the 50S ribosomal subunit.

Its function is as follows. One of the primary rRNA binding proteins, this protein initially binds near the 5'-end of the 23S rRNA. It is important during the early stages of 50S assembly. It makes multiple contacts with different domains of the 23S rRNA in the assembled 50S subunit and ribosome. Functionally, forms part of the polypeptide exit tunnel. The chain is Large ribosomal subunit protein uL4 from Saccharolobus islandicus (strain L.S.2.15 / Lassen #1) (Sulfolobus islandicus).